Here is a 160-residue protein sequence, read N- to C-terminus: Nascent polypeptide-associated complex subunit beta (160 aa).

2 disordered regions span residues 16 to 36 (GGKG…GTDD) and 118 to 160 (ESYQ…TEVE). Over residues 20 to 30 (TPRRKVKKVHK) the composition is skewed to basic residues. Residues 33-98 (GTDDKKLQTA…GEDKELTELV (66 aa)) form the NAC-A/B domain. Positions 124–134 (QKEKGEDGDKK) are enriched in basic and acidic residues. Residues 135-145 (DDDDEDDDDIP) show a composition bias toward acidic residues.

It belongs to the NAC-beta family. In terms of assembly, part of the nascent polypeptide-associated complex (NAC), consisting of EGD2 and EGD1. NAC associates with ribosomes via EGD1.

The protein resides in the cytoplasm. It is found in the nucleus. Its function is as follows. Component of the nascent polypeptide-associated complex (NAC), a dynamic component of the ribosomal exit tunnel, protecting the emerging polypeptides from interaction with other cytoplasmic proteins to ensure appropriate nascent protein targeting. The NAC complex also promotes mitochondrial protein import by enhancing productive ribosome interactions with the outer mitochondrial membrane and blocks the inappropriate interaction of ribosomes translating non-secretory nascent polypeptides with translocation sites in the membrane of the endoplasmic reticulum. EGD1 may act as a transcription factor that exert a negative effect on the expression of several genes that are transcribed by RNA polymerase II. This is Nascent polypeptide-associated complex subunit beta (EGD1) from Phaeosphaeria nodorum (strain SN15 / ATCC MYA-4574 / FGSC 10173) (Glume blotch fungus).